Consider the following 66-residue polypeptide: Photosystem II reaction center protein J (66 aa).

The helical transmembrane segment at 37–57 (LWLVATAGGMAVIFVVGLFFY) threads the bilayer.

Belongs to the PsbJ family. PSII is composed of 1 copy each of membrane proteins PsbA, PsbB, PsbC, PsbD, PsbE, PsbF, PsbH, PsbI, PsbJ, PsbK, PsbL, PsbM, PsbT, PsbX, PsbY, PsbZ, Psb30/Ycf12, peripheral proteins PsbO, CyanoQ (PsbQ), PsbU, PsbV and a large number of cofactors. It forms dimeric complexes.

The protein resides in the cellular thylakoid membrane. Functionally, one of the components of the core complex of photosystem II (PSII). PSII is a light-driven water:plastoquinone oxidoreductase that uses light energy to abstract electrons from H(2)O, generating O(2) and a proton gradient subsequently used for ATP formation. It consists of a core antenna complex that captures photons, and an electron transfer chain that converts photonic excitation into a charge separation. The polypeptide is Photosystem II reaction center protein J (Synechococcus sp. (strain CC9311)).